A 216-amino-acid chain; its full sequence is Glycerol-3-phosphate acyltransferase (216 aa).

The next 5 membrane-spanning stretches (helical) occupy residues 4-24, 56-76, 80-100, 112-132, and 138-158; these read IALG…AILV, VAVL…AYLL, PLYL…PVFF, FGAI…TWLL, and GYSS…VWWF.

Belongs to the PlsY family. As to quaternary structure, probably interacts with PlsX.

It localises to the cell inner membrane. It catalyses the reaction an acyl phosphate + sn-glycerol 3-phosphate = a 1-acyl-sn-glycero-3-phosphate + phosphate. It functions in the pathway lipid metabolism; phospholipid metabolism. Its function is as follows. Catalyzes the transfer of an acyl group from acyl-phosphate (acyl-PO(4)) to glycerol-3-phosphate (G3P) to form lysophosphatidic acid (LPA). This enzyme utilizes acyl-phosphate as fatty acyl donor, but not acyl-CoA or acyl-ACP. In Yersinia pseudotuberculosis serotype O:1b (strain IP 31758), this protein is Glycerol-3-phosphate acyltransferase.